We begin with the raw amino-acid sequence, 98 residues long: UPF0213 protein BPUM_0019 (98 aa).

The GIY-YIG domain maps to 4–79 (HNHYFYVLKC…KTWTRKKKDL (76 aa)).

Belongs to the UPF0213 family.

In Bacillus pumilus (strain SAFR-032), this protein is UPF0213 protein BPUM_0019.